The primary structure comprises 344 residues: Sorting nexin-16 (344 aa).

The segment covering 1 to 10 (MATPYVPVPM) has biased composition (pro residues). Residues 1 to 72 (MATPYVPVPM…SASSMCGSPL (72 aa)) form a disordered region. Residues 14–26 (NSASSFTNNRNQR) show a composition bias toward polar residues. Positions 27-40 (SSSFGSVSTSSTSS) are enriched in low complexity. Positions 52–68 (LKQTNVQDQMDSASSMC) are enriched in polar residues. The PX domain maps to 105-218 (DRPSTPTILG…EFLCLDDPPG (114 aa)). A 1,2-diacyl-sn-glycero-3-phospho-(1D-myo-inositol-3-phosphate)-binding residues include R144, T146, and R184. S222 carries the post-translational modification Phosphoserine. Positions 223–278 (LEESRAFCETLEETNYHLQRELLEKQKEVESLKKLLGEKQLHIDALETRIRTLSLE) form a coiled coil.

Belongs to the sorting nexin family. As to quaternary structure, homooligomer. Interacts with EGFR.

The protein resides in the early endosome membrane. Its subcellular location is the late endosome membrane. It localises to the cytoplasm. It is found in the lysosome. In terms of biological role, may be involved in several stages of intracellular trafficking. Plays a role in protein transport from early to late endosomes. Plays a role in protein transport to the lysosome. Promotes degradation of EGFR after EGF signaling. This is Sorting nexin-16 (Snx16) from Mus musculus (Mouse).